The primary structure comprises 252 residues: Flagellar L-ring protein (252 aa).

Positions 1–25 (MLKLASLNRIVLTGTLLAAAGLASG) are cleaved as a signal peptide. Residue cysteine 26 is the site of N-palmitoyl cysteine attachment. The S-diacylglycerol cysteine moiety is linked to residue cysteine 26.

It belongs to the FlgH family. In terms of assembly, the basal body constitutes a major portion of the flagellar organelle and consists of four rings (L,P,S, and M) mounted on a central rod.

Its subcellular location is the cell outer membrane. The protein resides in the bacterial flagellum basal body. In terms of biological role, assembles around the rod to form the L-ring and probably protects the motor/basal body from shearing forces during rotation. This Nitrobacter winogradskyi (strain ATCC 25391 / DSM 10237 / CIP 104748 / NCIMB 11846 / Nb-255) protein is Flagellar L-ring protein.